We begin with the raw amino-acid sequence, 123 residues long: Small ribosomal subunit protein uS13 (123 aa).

The disordered stretch occupies residues 94–123 (RRGLPVRGQHTKNNARTRKGPARAIAGKKK).

Belongs to the universal ribosomal protein uS13 family. In terms of assembly, part of the 30S ribosomal subunit. Forms a loose heterodimer with protein S19. Forms two bridges to the 50S subunit in the 70S ribosome.

In terms of biological role, located at the top of the head of the 30S subunit, it contacts several helices of the 16S rRNA. In the 70S ribosome it contacts the 23S rRNA (bridge B1a) and protein L5 of the 50S subunit (bridge B1b), connecting the 2 subunits; these bridges are implicated in subunit movement. Contacts the tRNAs in the A and P-sites. The polypeptide is Small ribosomal subunit protein uS13 (Oenococcus oeni (strain ATCC BAA-331 / PSU-1)).